A 286-amino-acid polypeptide reads, in one-letter code: MIHQQHMRNIAQWLQENGITRATVAPDWMSIPCGFMACDAQRVICRIDECRGWSAGLALAPVMFRAQLNEQDLPLSLTVVGIAPEKLSAWAGADAERLTVTALPAITTYGEPEGNLLTGPWQPRVSYRKQWARWRVMILPILLILVALAVERGVTLWSVSEQVAQSRTQAEEQFLTLFPEQKRIVNLRSQVTMALKKYRPQADDTRLLAELSAIASTLKSASLSDIEMRGFTFDQKRQILHLQLRAANFASFDKLRSVLATDYVVQQDALQKEGDAVSGGVTLRRK.

The helical transmembrane segment at Val136 to Leu156 threads the bilayer.

The protein belongs to the GSP L family.

Its subcellular location is the cell inner membrane. Functionally, involved in a type II secretion system (T2SS, formerly general secretion pathway, GSP) for the export of folded proteins across the outer membrane. The chain is Putative type II secretion system L-type protein YghE from Escherichia coli (strain K12).